We begin with the raw amino-acid sequence, 241 residues long: Pyrroloquinoline-quinone synthase (241 aa).

It belongs to the PqqC family.

It carries out the reaction 6-(2-amino-2-carboxyethyl)-7,8-dioxo-1,2,3,4,7,8-hexahydroquinoline-2,4-dicarboxylate + 3 O2 = pyrroloquinoline quinone + 2 H2O2 + 2 H2O + H(+). Its pathway is cofactor biosynthesis; pyrroloquinoline quinone biosynthesis. Its function is as follows. Ring cyclization and eight-electron oxidation of 3a-(2-amino-2-carboxyethyl)-4,5-dioxo-4,5,6,7,8,9-hexahydroquinoline-7,9-dicarboxylic-acid to PQQ. In Ruegeria pomeroyi (strain ATCC 700808 / DSM 15171 / DSS-3) (Silicibacter pomeroyi), this protein is Pyrroloquinoline-quinone synthase.